Reading from the N-terminus, the 292-residue chain is Aspartate carbamoyltransferase catalytic subunit (292 aa).

Residues Arg-50 and Thr-51 each coordinate carbamoyl phosphate. Lys-78 provides a ligand contact to L-aspartate. Residues Arg-100, His-128, and Gln-131 each contribute to the carbamoyl phosphate site. The L-aspartate site is built by Arg-161 and Arg-211. Residues Gly-250 and Pro-251 each contribute to the carbamoyl phosphate site.

Belongs to the aspartate/ornithine carbamoyltransferase superfamily. ATCase family. As to quaternary structure, heterododecamer (2C3:3R2) of six catalytic PyrB chains organized as two trimers (C3), and six regulatory PyrI chains organized as three dimers (R2).

The enzyme catalyses carbamoyl phosphate + L-aspartate = N-carbamoyl-L-aspartate + phosphate + H(+). Its pathway is pyrimidine metabolism; UMP biosynthesis via de novo pathway; (S)-dihydroorotate from bicarbonate: step 2/3. Its function is as follows. Catalyzes the condensation of carbamoyl phosphate and aspartate to form carbamoyl aspartate and inorganic phosphate, the committed step in the de novo pyrimidine nucleotide biosynthesis pathway. The chain is Aspartate carbamoyltransferase catalytic subunit from Nitratiruptor sp. (strain SB155-2).